A 185-amino-acid chain; its full sequence is Ribosome-recycling factor (185 aa).

This sequence belongs to the RRF family.

Its subcellular location is the cytoplasm. Its function is as follows. Responsible for the release of ribosomes from messenger RNA at the termination of protein biosynthesis. May increase the efficiency of translation by recycling ribosomes from one round of translation to another. The chain is Ribosome-recycling factor from Pseudomonas entomophila (strain L48).